We begin with the raw amino-acid sequence, 317 residues long: Glutathione synthetase (317 aa).

Residues 124-310 (EKLFTAWFPE…ITGKLMDAIE (187 aa)) form the ATP-grasp domain. 150 to 207 (FRQEHGDIILKPLDGMGGASIFRVKENDPNVSVIIETLTNHGQNYAMAQTFVPDISNG) lines the ATP pocket. Positions 281 and 283 each coordinate Mg(2+).

The protein belongs to the prokaryotic GSH synthase family. Mg(2+) is required as a cofactor. The cofactor is Mn(2+).

The enzyme catalyses gamma-L-glutamyl-L-cysteine + glycine + ATP = glutathione + ADP + phosphate + H(+). It participates in sulfur metabolism; glutathione biosynthesis; glutathione from L-cysteine and L-glutamate: step 2/2. The protein is Glutathione synthetase of Vibrio vulnificus (strain CMCP6).